We begin with the raw amino-acid sequence, 102 residues long: Small ribosomal subunit protein uS10 (102 aa).

This sequence belongs to the universal ribosomal protein uS10 family. In terms of assembly, part of the 30S ribosomal subunit.

Functionally, involved in the binding of tRNA to the ribosomes. In Cenarchaeum symbiosum (strain A), this protein is Small ribosomal subunit protein uS10.